Consider the following 219-residue polypeptide: UPF0502 protein HCH_06091 (219 aa).

This sequence belongs to the UPF0502 family.

The polypeptide is UPF0502 protein HCH_06091 (Hahella chejuensis (strain KCTC 2396)).